Reading from the N-terminus, the 415-residue chain is 6-phospho-beta-glucosidase BglT (415 aa).

1–64 (MRIAVIGGGS…DRFKVLISDT (64 aa)) serves as a coordination point for NAD(+). Residues R87 and N140 each contribute to the substrate site. C162 serves as a coordination point for Mn(2+). Residue N163 participates in substrate binding. H192 provides a ligand contact to Mn(2+). Y241 (proton acceptor) is an active-site residue. Substrate is bound at residue R261.

Belongs to the glycosyl hydrolase 4 family. Homodimer or homotetramer. Exists in a homodimer/homotetramer equilibrium state in solution. It depends on NAD(+) as a cofactor. Mn(2+) is required as a cofactor.

The enzyme catalyses 6-phospho-beta-D-glucosyl-(1-&gt;4)-D-glucose + H2O = D-glucose 6-phosphate + D-glucose. Functionally, hydrolyzes cellobiose 6'-phosphate into glucose 6-phosphate (Glc6P) and glucose. The chain is 6-phospho-beta-glucosidase BglT (bglT) from Thermotoga maritima (strain ATCC 43589 / DSM 3109 / JCM 10099 / NBRC 100826 / MSB8).